The chain runs to 508 residues: Ell-associated factor Eaf (508 aa).

Composition is skewed to polar residues over residues 140–150 (GQGQLHSQGAN) and 161–190 (GHSTGTAPKMENSTMRISTKTKVSTGSRRN). 2 disordered regions span residues 140–226 (GQGQ…WDAN) and 251–508 (HNSG…DDDE). The residue at position 200 (Ser200) is a Phosphoserine. Low complexity predominate over residues 251-268 (HNSGHANTSGSSTGSATG). 2 stretches are compositionally biased toward polar residues: residues 272 to 281 (FGSTSSSSHM) and 296 to 313 (QQMQQRLSPPMAQQQQPS). Residues 314 to 341 (NYGRGYNGGHNHVQQQQQRNSPQQQRPP) are compositionally biased toward low complexity. Acidic residues predominate over residues 391–406 (DSSDSDSGSDSDDSTE). 3 stretches are compositionally biased toward low complexity: residues 412-444 (QGQQQDHQQQQQQQVYQNHNHQQQQIAQQHLNQ), 461-477 (HQHQQQMAPHQQQQKQQ), and 489-502 (NDLLQNDLQLSSNS).

The protein belongs to the EAF family.

The protein localises to the nucleus. In terms of biological role, promotes transcriptional elongation by Su(Tpl)/ELL. Essential for development. The polypeptide is Ell-associated factor Eaf (Drosophila erecta (Fruit fly)).